The sequence spans 298 residues: Inosose dehydratase (298 aa).

It belongs to the IolE/MocC family. It depends on glutathione as a cofactor. Requires Co(2+) as cofactor. Mn(2+) is required as a cofactor.

It carries out the reaction scyllo-inosose = 3D-3,5/4-trihydroxycyclohexane-1,2-dione + H2O. Functionally, catalyzes the dehydration of inosose (2-keto-myo-inositol, 2KMI or 2,4,6/3,5-pentahydroxycyclohexanone) to 3D-(3,5/4)-trihydroxycyclohexane-1,2-dione (D-2,3-diketo-4-deoxy-epi-inositol). The polypeptide is Inosose dehydratase (Yersinia enterocolitica serotype O:8 / biotype 1B (strain NCTC 13174 / 8081)).